A 141-amino-acid polypeptide reads, in one-letter code: Alpha-lactalbumin (141 aa).

Residues 1–19 (MMSFVSLLVVGILFPAIQA) form the signal peptide. In terms of domain architecture, C-type lysozyme spans 20-141 (KQFTKCELSQ…KLDQWLCEKM (122 aa)). 4 cysteine pairs are disulfide-bonded: Cys25–Cys138, Cys47–Cys129, Cys80–Cys95, and Cys91–Cys109. Residues Lys97, Asp100, Asp102, Asp105, and Asp106 each coordinate Ca(2+).

Belongs to the glycosyl hydrolase 22 family. As to quaternary structure, lactose synthase (LS) is a heterodimer of a catalytic component, beta1,4-galactosyltransferase (beta4Gal-T1) and a regulatory component, alpha-lactalbumin (LA). In terms of tissue distribution, mammary gland specific. Secreted in milk.

The protein resides in the secreted. Regulatory subunit of lactose synthase, changes the substrate specificity of galactosyltransferase in the mammary gland making glucose a good acceptor substrate for this enzyme. This enables LS to synthesize lactose, the major carbohydrate component of milk. In other tissues, galactosyltransferase transfers galactose onto the N-acetylglucosamine of the oligosaccharide chains in glycoproteins. The sequence is that of Alpha-lactalbumin (LALBA) from Sus scrofa (Pig).